A 445-amino-acid polypeptide reads, in one-letter code: Tubulin beta-1 chain (445 aa).

An MREI motif motif is present at residues 1 to 4 (MREI). GTP-binding residues include glutamine 11, glutamate 69, serine 138, glycine 142, threonine 143, glycine 144, asparagine 204, and asparagine 226. Glutamate 69 is a binding site for Mg(2+). The segment at 425–445 (YQDATAEEEGEFEEEGEEELA) is disordered. Over residues 429-445 (TAEEEGEFEEEGEEELA) the composition is skewed to acidic residues. Glutamate 438 is modified (5-glutamyl polyglutamate).

This sequence belongs to the tubulin family. As to quaternary structure, dimer of alpha and beta chains. A typical microtubule is a hollow water-filled tube with an outer diameter of 25 nm and an inner diameter of 15 nM. Alpha-beta heterodimers associate head-to-tail to form protofilaments running lengthwise along the microtubule wall with the beta-tubulin subunit facing the microtubule plus end conferring a structural polarity. Microtubules usually have 13 protofilaments but different protofilament numbers can be found in some organisms and specialized cells. Mg(2+) serves as cofactor. Post-translationally, some glutamate residues at the C-terminus are polyglycylated, resulting in polyglycine chains on the gamma-carboxyl group. Glycylation is mainly limited to tubulin incorporated into axonemes (cilia and flagella) whereas glutamylation is prevalent in neuronal cells, centrioles, axonemes, and the mitotic spindle. Both modifications can coexist on the same protein on adjacent residues, and lowering polyglycylation levels increases polyglutamylation, and reciprocally. The precise function of polyglycylation is still unclear. Some glutamate residues at the C-terminus are polyglutamylated, resulting in polyglutamate chains on the gamma-carboxyl group. Polyglutamylation plays a key role in microtubule severing by spastin (SPAST). SPAST preferentially recognizes and acts on microtubules decorated with short polyglutamate tails: severing activity by SPAST increases as the number of glutamates per tubulin rises from one to eight, but decreases beyond this glutamylation threshold.

It is found in the cytoplasm. It localises to the cytoskeleton. Tubulin is the major constituent of microtubules, a cylinder consisting of laterally associated linear protofilaments composed of alpha- and beta-tubulin heterodimers. Microtubules grow by the addition of GTP-tubulin dimers to the microtubule end, where a stabilizing cap forms. Below the cap, tubulin dimers are in GDP-bound state, owing to GTPase activity of alpha-tubulin. The chain is Tubulin beta-1 chain from Gadus morhua (Atlantic cod).